We begin with the raw amino-acid sequence, 234 residues long: 7-carboxy-7-deazaguanine synthase (234 aa).

Substrate-binding positions include isoleucine 36–glycine 38 and arginine 51. The 193-residue stretch at phenylalanine 42 to glutamate 234 folds into the Radical SAM core domain. Cysteine 55, cysteine 59, and cysteine 62 together coordinate [4Fe-4S] cluster. Mg(2+) is bound at residue threonine 64. Position 100 (threonine 100) interacts with substrate. S-adenosyl-L-methionine is bound by residues glycine 102, serine 144–lysine 146, and glutamine 195–aspartate 198.

This sequence belongs to the radical SAM superfamily. 7-carboxy-7-deazaguanine synthase family. In terms of assembly, homodimer. It depends on [4Fe-4S] cluster as a cofactor. The cofactor is S-adenosyl-L-methionine. Requires Mg(2+) as cofactor.

The catalysed reaction is 6-carboxy-5,6,7,8-tetrahydropterin + H(+) = 7-carboxy-7-deazaguanine + NH4(+). It participates in purine metabolism; 7-cyano-7-deazaguanine biosynthesis. Its function is as follows. Catalyzes the complex heterocyclic radical-mediated conversion of 6-carboxy-5,6,7,8-tetrahydropterin (CPH4) to 7-carboxy-7-deazaguanine (CDG), a step common to the biosynthetic pathways of all 7-deazapurine-containing compounds. The sequence is that of 7-carboxy-7-deazaguanine synthase from Rickettsia prowazekii (strain Madrid E).